The primary structure comprises 121 residues: Large ribosomal subunit protein uL14 (121 aa).

The protein belongs to the universal ribosomal protein uL14 family. As to quaternary structure, part of the 50S ribosomal subunit. Forms a cluster with proteins L3 and L19. In the 70S ribosome, L14 and L19 interact and together make contacts with the 16S rRNA in bridges B5 and B8.

Functionally, binds to 23S rRNA. Forms part of two intersubunit bridges in the 70S ribosome. This Legionella pneumophila (strain Paris) protein is Large ribosomal subunit protein uL14.